The sequence spans 498 residues: ATP synthase subunit beta, chloroplastic (498 aa).

Phosphothreonine is present on Thr-6. Ser-13 bears the Phosphoserine mark. Gly-172–Thr-179 provides a ligand contact to ATP.

It belongs to the ATPase alpha/beta chains family. As to quaternary structure, F-type ATPases have 2 components, CF(1) - the catalytic core - and CF(0) - the membrane proton channel. CF(1) has five subunits: alpha(3), beta(3), gamma(1), delta(1), epsilon(1). CF(0) has four main subunits: a(1), b(1), b'(1) and c(9-12).

It localises to the plastid. Its subcellular location is the chloroplast thylakoid membrane. It catalyses the reaction ATP + H2O + 4 H(+)(in) = ADP + phosphate + 5 H(+)(out). In terms of biological role, produces ATP from ADP in the presence of a proton gradient across the membrane. The catalytic sites are hosted primarily by the beta subunits. The chain is ATP synthase subunit beta, chloroplastic from Draba nemorosa (Woodland whitlowgrass).